Here is a 185-residue protein sequence, read N- to C-terminus: MVLSSQLSVGMFISTKDGLYKVTSVSKVAGPKGESFIKVALQAADSDVVIERNFKATQEVKEAQFETRTLEYLYLEDESYLFLDLGNYEKLFIPQEIMKDNFLFLKAGVTVSAMVYDNVVFSVELPHFLELMVSKTDFPGDSLSLSGGVKKALLETGIEVMVPPFVEIGDVIKIDTRTCEYIQRV.

Belongs to the elongation factor P family.

The protein localises to the cytoplasm. It functions in the pathway protein biosynthesis; polypeptide chain elongation. Involved in peptide bond synthesis. Stimulates efficient translation and peptide-bond synthesis on native or reconstituted 70S ribosomes in vitro. Probably functions indirectly by altering the affinity of the ribosome for aminoacyl-tRNA, thus increasing their reactivity as acceptors for peptidyl transferase. The polypeptide is Elongation factor P 1 (efp1) (Chlamydia pneumoniae (Chlamydophila pneumoniae)).